A 197-amino-acid polypeptide reads, in one-letter code: UPF0251 protein CT1277 (197 aa).

The disordered stretch occupies residues glycine 138 to valine 197. The span at glycine 157–glycine 171 shows a compositional bias: basic and acidic residues. Gly residues predominate over residues glutamate 172–glutamine 184.

It belongs to the UPF0251 family.

The polypeptide is UPF0251 protein CT1277 (Chlorobaculum tepidum (strain ATCC 49652 / DSM 12025 / NBRC 103806 / TLS) (Chlorobium tepidum)).